Here is a 283-residue protein sequence, read N- to C-terminus: Protein-L-isoaspartate O-methyltransferase (283 aa).

Residue serine 122 is part of the active site.

The protein belongs to the methyltransferase superfamily. L-isoaspartyl/D-aspartyl protein methyltransferase family.

It localises to the cytoplasm. The catalysed reaction is [protein]-L-isoaspartate + S-adenosyl-L-methionine = [protein]-L-isoaspartate alpha-methyl ester + S-adenosyl-L-homocysteine. Its function is as follows. Catalyzes the methyl esterification of L-isoaspartyl residues in peptides and proteins that result from spontaneous decomposition of normal L-aspartyl and L-asparaginyl residues. It plays a role in the repair and/or degradation of damaged proteins. The polypeptide is Protein-L-isoaspartate O-methyltransferase (Leptothrix cholodnii (strain ATCC 51168 / LMG 8142 / SP-6) (Leptothrix discophora (strain SP-6))).